The primary structure comprises 273 residues: 2,3,4,5-tetrahydropyridine-2,6-dicarboxylate N-succinyltransferase (273 aa).

It belongs to the transferase hexapeptide repeat family.

It is found in the cytoplasm. It carries out the reaction (S)-2,3,4,5-tetrahydrodipicolinate + succinyl-CoA + H2O = (S)-2-succinylamino-6-oxoheptanedioate + CoA. The protein operates within amino-acid biosynthesis; L-lysine biosynthesis via DAP pathway; LL-2,6-diaminopimelate from (S)-tetrahydrodipicolinate (succinylase route): step 1/3. The sequence is that of 2,3,4,5-tetrahydropyridine-2,6-dicarboxylate N-succinyltransferase from Acinetobacter baumannii (strain SDF).